A 436-amino-acid polypeptide reads, in one-letter code: Gamma-glutamyl phosphate reductase (436 aa).

It belongs to the gamma-glutamyl phosphate reductase family.

It is found in the cytoplasm. The catalysed reaction is L-glutamate 5-semialdehyde + phosphate + NADP(+) = L-glutamyl 5-phosphate + NADPH + H(+). Its pathway is amino-acid biosynthesis; L-proline biosynthesis; L-glutamate 5-semialdehyde from L-glutamate: step 2/2. In terms of biological role, catalyzes the NADPH-dependent reduction of L-glutamate 5-phosphate into L-glutamate 5-semialdehyde and phosphate. The product spontaneously undergoes cyclization to form 1-pyrroline-5-carboxylate. The sequence is that of Gamma-glutamyl phosphate reductase from Prochlorococcus marinus (strain AS9601).